Consider the following 215-residue polypeptide: Venom allergen 5.02 (215 aa).

The first 10 residues, 1 to 10, serve as a signal peptide directing secretion; the sequence is PIINLSFGEA. 4 cysteine pairs are disulfide-bonded: cysteine 14–cysteine 26, cysteine 18–cysteine 111, cysteine 36–cysteine 104, and cysteine 181–cysteine 198. One can recognise an SCP domain in the interval 55–200; it reads VNRHNQFRQK…WHTHYLVCNY (146 aa).

It belongs to the CRISP family. Venom allergen 5-like subfamily. In terms of tissue distribution, expressed by the venom gland.

The protein localises to the secreted. This is Venom allergen 5.02 from Dolichovespula maculata (Bald-faced hornet).